The chain runs to 145 residues: Arginine repressor (145 aa).

The protein belongs to the ArgR family.

Its subcellular location is the cytoplasm. It functions in the pathway amino-acid biosynthesis; L-arginine biosynthesis [regulation]. Regulates arginine biosynthesis genes. The protein is Arginine repressor of Streptococcus pyogenes serotype M3 (strain ATCC BAA-595 / MGAS315).